We begin with the raw amino-acid sequence, 443 residues long: Glutamyl-tRNA reductase (443 aa).

Substrate is bound by residues 49 to 52, S109, 114 to 116, and Q120; these read TCNR and ETQ. C50 (nucleophile) is an active-site residue. 189–194 is an NADP(+) binding site; that stretch reads GAGKMS.

Belongs to the glutamyl-tRNA reductase family. In terms of assembly, homodimer.

The catalysed reaction is (S)-4-amino-5-oxopentanoate + tRNA(Glu) + NADP(+) = L-glutamyl-tRNA(Glu) + NADPH + H(+). The protein operates within porphyrin-containing compound metabolism; protoporphyrin-IX biosynthesis; 5-aminolevulinate from L-glutamyl-tRNA(Glu): step 1/2. Catalyzes the NADPH-dependent reduction of glutamyl-tRNA(Glu) to glutamate 1-semialdehyde (GSA). The chain is Glutamyl-tRNA reductase from Heliobacterium mobile (Heliobacillus mobilis).